A 463-amino-acid chain; its full sequence is Sporulation-specific protein 22 (463 aa).

The signal sequence occupies residues 1–25; it reads MNRITRKSCLFAIIFASLFVTHALG. LRR repeat units lie at residues 127–147, 185–206, 207–233, 251–275, and 302–325; these read SPEL…LFQL, IEII…NFNK, VQEI…TIRG, LREV…KVKS, and INNV…LMIA. Residues Asn-256, Asn-314, and Asn-327 are each glycosylated (N-linked (GlcNAc...) asparagine). Asn-440 carries the GPI-anchor amidated asparagine lipid modification. The propeptide at 441–463 is removed in mature form; sequence SANPSMQLDPLLFGTCLVAMLLF.

The protein belongs to the SPS2 family.

The protein localises to the cell membrane. Its function is as follows. Redundant with SPS2 for the organization of the beta-glucan layer of the spore wall. In Saccharomyces cerevisiae (strain ATCC 204508 / S288c) (Baker's yeast), this protein is Sporulation-specific protein 22 (SPS22).